We begin with the raw amino-acid sequence, 95 residues long: UPF0223 protein Bsph_1378 (95 aa).

It belongs to the UPF0223 family.

This is UPF0223 protein Bsph_1378 from Lysinibacillus sphaericus (strain C3-41).